We begin with the raw amino-acid sequence, 448 residues long: Tryptophan--tRNA ligase (448 aa).

ATP contacts are provided by residues 10 to 12 (TPT) and 18 to 19 (GN). The 'HIGH' region motif lies at 11–19 (PTGTPHLGN). Aspartate 143 serves as a coordination point for L-tryptophan. ATP is bound by residues 155–157 (GRD), leucine 197, and 204–208 (KMSKS). The short motif at 204–208 (KMSKS) is the 'KMSKS' region element.

Belongs to the class-I aminoacyl-tRNA synthetase family. In terms of assembly, homodimer.

It localises to the cytoplasm. It catalyses the reaction tRNA(Trp) + L-tryptophan + ATP = L-tryptophyl-tRNA(Trp) + AMP + diphosphate + H(+). Its function is as follows. Catalyzes the attachment of tryptophan to tRNA(Trp). The chain is Tryptophan--tRNA ligase from Pseudomonas aeruginosa (strain ATCC 15692 / DSM 22644 / CIP 104116 / JCM 14847 / LMG 12228 / 1C / PRS 101 / PAO1).